We begin with the raw amino-acid sequence, 432 residues long: Tyrosine-protein phosphatase non-receptor type 1 (432 aa).

The residue at position 1 (Met-1) is an N-acetylmethionine. A Tyrosine-protein phosphatase domain is found at 3-277 (MEKEFEQIDK…RFSYLAVIEG (275 aa)). At Tyr-20 the chain carries Phosphotyrosine. Phosphoserine; by PKB/AKT1, CLK1 and CLK2 is present on Ser-50. Tyr-66 carries the phosphotyrosine; by EGFR modification. Substrate contacts are provided by residues Asp-181 and 215 to 221 (CSAGIGR). The active-site Phosphocysteine intermediate is the Cys-215. Residue Cys-215 is modified to Cysteine persulfide. Cys-215 carries the S-nitrosocysteine; in reversibly inhibited form modification. A phosphoserine; by CLK1 and CLK2 mark is found at Ser-242 and Ser-243. Gln-262 lines the substrate pocket. The disordered stretch occupies residues 297-322 (EDLEPPPEHVPPPPRPPKRTLEPHNG). Phosphoserine occurs at positions 335, 362, and 364. The disordered stretch occupies residues 350–402 (SRAPSIAVHSMSSMSQDTEVRKRMVGGGLQSAQASVPTEEELSPTEEEQKAHR). Residue Thr-367 is modified to Phosphothreonine.

It belongs to the protein-tyrosine phosphatase family. Non-receptor class 1 subfamily. Interacts with EPHA3 (phosphorylated); dephosphorylates EPHA3 and may regulate its trafficking and function. Interacts with MET. Interacts with NCK1. Ser-50 is the major site of phosphorylation as compared to Ser-242 and Ser-243. Activated by phosphorylation at Ser-50. In terms of processing, S-nitrosylation of Cys-215 inactivates the enzyme activity. Post-translationally, sulfhydration at Cys-215 following endoplasmic reticulum stress inactivates the enzyme activity, promoting EIF2AK3/PERK activity. As to expression, found in several tissues including central nervous system, liver and kidney. A high level of expression was found in the hippocampus.

It localises to the endoplasmic reticulum membrane. It catalyses the reaction O-phospho-L-tyrosyl-[protein] + H2O = L-tyrosyl-[protein] + phosphate. Tyrosine-protein phosphatase which acts as a regulator of endoplasmic reticulum unfolded protein response. Mediates dephosphorylation of EIF2AK3/PERK; inactivating the protein kinase activity of EIF2AK3/PERK. May play an important role in CKII- and p60c-src-induced signal transduction cascades. May regulate the EFNA5-EPHA3 signaling pathway which modulates cell reorganization and cell-cell repulsion. May also regulate the hepatocyte growth factor receptor signaling pathway through dephosphorylation of MET. The sequence is that of Tyrosine-protein phosphatase non-receptor type 1 (Ptpn1) from Rattus norvegicus (Rat).